Reading from the N-terminus, the 199-residue chain is Guanylate kinase (199 aa).

In terms of domain architecture, Guanylate kinase-like spans 20–198 (GKLIVLTGPS…ALQAIEVALF (179 aa)). 27-34 (GPSGVGKG) contacts ATP.

This sequence belongs to the guanylate kinase family.

It is found in the cytoplasm. The catalysed reaction is GMP + ATP = GDP + ADP. Essential for recycling GMP and indirectly, cGMP. This chain is Guanylate kinase, found in Trichormus variabilis (strain ATCC 29413 / PCC 7937) (Anabaena variabilis).